Consider the following 342-residue polypeptide: S-adenosylmethionine:tRNA ribosyltransferase-isomerase (342 aa).

The protein belongs to the QueA family. In terms of assembly, monomer.

It is found in the cytoplasm. It carries out the reaction 7-aminomethyl-7-carbaguanosine(34) in tRNA + S-adenosyl-L-methionine = epoxyqueuosine(34) in tRNA + adenine + L-methionine + 2 H(+). The protein operates within tRNA modification; tRNA-queuosine biosynthesis. Transfers and isomerizes the ribose moiety from AdoMet to the 7-aminomethyl group of 7-deazaguanine (preQ1-tRNA) to give epoxyqueuosine (oQ-tRNA). The protein is S-adenosylmethionine:tRNA ribosyltransferase-isomerase of Moorella thermoacetica (strain ATCC 39073 / JCM 9320).